A 394-amino-acid chain; its full sequence is Acetate kinase (394 aa).

Asn-7 is a Mg(2+) binding site. Lys-14 serves as a coordination point for ATP. Residue Arg-88 participates in substrate binding. The active-site Proton donor/acceptor is the Asp-145. ATP contacts are provided by residues 205–209, 279–281, and 327–331; these read HLGNG, DFR, and GIGEN. Glu-379 is a binding site for Mg(2+).

This sequence belongs to the acetokinase family. In terms of assembly, homodimer. Mg(2+) serves as cofactor. Requires Mn(2+) as cofactor.

It localises to the cytoplasm. It catalyses the reaction acetate + ATP = acetyl phosphate + ADP. It functions in the pathway metabolic intermediate biosynthesis; acetyl-CoA biosynthesis; acetyl-CoA from acetate: step 1/2. In terms of biological role, catalyzes the formation of acetyl phosphate from acetate and ATP. Can also catalyze the reverse reaction. This Campylobacter lari (strain RM2100 / D67 / ATCC BAA-1060) protein is Acetate kinase.